A 201-amino-acid chain; its full sequence is Large ribosomal subunit protein uL4 (201 aa).

A disordered region spans residues A45–G66.

Belongs to the universal ribosomal protein uL4 family. In terms of assembly, part of the 50S ribosomal subunit.

In terms of biological role, one of the primary rRNA binding proteins, this protein initially binds near the 5'-end of the 23S rRNA. It is important during the early stages of 50S assembly. It makes multiple contacts with different domains of the 23S rRNA in the assembled 50S subunit and ribosome. Functionally, forms part of the polypeptide exit tunnel. The sequence is that of Large ribosomal subunit protein uL4 from Aeromonas salmonicida (strain A449).